We begin with the raw amino-acid sequence, 529 residues long: Putative inorganic phosphate cotransporter (529 aa).

Transmembrane regions (helical) follow at residues 37-57 (FATR…AYVM), 110-130 (YILS…GILA), 148-168 (VFAF…LCAV), 202-222 (AVYA…GLLA), 232-252 (SIFY…LIFV), 338-358 (LPYL…DWMI), 429-449 (FLMS…PIAA), and 466-486 (IVFF…NIFG). Residues 495–529 (NPEDDEQKPALQTTVTTSPARLSNGSTAPAAISSS) form a disordered region. Residues 504-529 (ALQTTVTTSPARLSNGSTAPAAISSS) show a composition bias toward polar residues.

It belongs to the major facilitator superfamily. Sodium/anion cotransporter family.

The protein resides in the membrane. In terms of biological role, may be an inorganic phosphate cotransporter. The protein is Putative inorganic phosphate cotransporter (Picot) of Drosophila melanogaster (Fruit fly).